The primary structure comprises 295 residues: Bifunctional protein FolD (295 aa).

Residues 166-168 (GRS), Ser195, and Ile236 contribute to the NADP(+) site.

This sequence belongs to the tetrahydrofolate dehydrogenase/cyclohydrolase family. Homodimer.

It catalyses the reaction (6R)-5,10-methylene-5,6,7,8-tetrahydrofolate + NADP(+) = (6R)-5,10-methenyltetrahydrofolate + NADPH. The catalysed reaction is (6R)-5,10-methenyltetrahydrofolate + H2O = (6R)-10-formyltetrahydrofolate + H(+). It functions in the pathway one-carbon metabolism; tetrahydrofolate interconversion. Catalyzes the oxidation of 5,10-methylenetetrahydrofolate to 5,10-methenyltetrahydrofolate and then the hydrolysis of 5,10-methenyltetrahydrofolate to 10-formyltetrahydrofolate. The protein is Bifunctional protein FolD of Pelodictyon phaeoclathratiforme (strain DSM 5477 / BU-1).